We begin with the raw amino-acid sequence, 308 residues long: Pantothenate kinase (308 aa).

93–100 (GSVAVGKS) contributes to the ATP binding site.

Belongs to the prokaryotic pantothenate kinase family.

It is found in the cytoplasm. The catalysed reaction is (R)-pantothenate + ATP = (R)-4'-phosphopantothenate + ADP + H(+). Its pathway is cofactor biosynthesis; coenzyme A biosynthesis; CoA from (R)-pantothenate: step 1/5. The protein is Pantothenate kinase of Corynebacterium aurimucosum (strain ATCC 700975 / DSM 44827 / CIP 107346 / CN-1) (Corynebacterium nigricans).